The following is a 319-amino-acid chain: Thioredoxin reductase (319 aa).

FAD-binding positions include S11–A14, V40–A41, Q45, N54, V87, C145, D288, and R295–A297. A disulfide bond links C142 and C145.

This sequence belongs to the class-II pyridine nucleotide-disulfide oxidoreductase family. Homodimer. FAD is required as a cofactor.

The protein resides in the cytoplasm. It carries out the reaction [thioredoxin]-dithiol + NADP(+) = [thioredoxin]-disulfide + NADPH + H(+). This Eremothecium gossypii (strain ATCC 10895 / CBS 109.51 / FGSC 9923 / NRRL Y-1056) (Yeast) protein is Thioredoxin reductase (TRR1).